Consider the following 119-residue polypeptide: Large ribosomal subunit protein uL14 (119 aa).

It belongs to the universal ribosomal protein uL14 family. Part of the 50S ribosomal subunit. Forms a cluster with proteins L3 and L19. In the 70S ribosome, L14 and L19 interact and together make contacts with the 16S rRNA in bridges B5 and B8.

In terms of biological role, binds to 23S rRNA. Forms part of two intersubunit bridges in the 70S ribosome. The chain is Large ribosomal subunit protein uL14 from Anaplasma marginale (strain St. Maries).